A 576-amino-acid polypeptide reads, in one-letter code: Arginine--tRNA ligase (576 aa).

Residues 132–142 (ANPTGPMHIGH) carry the 'HIGH' region motif.

This sequence belongs to the class-I aminoacyl-tRNA synthetase family. As to quaternary structure, monomer.

The protein localises to the cytoplasm. The catalysed reaction is tRNA(Arg) + L-arginine + ATP = L-arginyl-tRNA(Arg) + AMP + diphosphate. The sequence is that of Arginine--tRNA ligase from Ehrlichia chaffeensis (strain ATCC CRL-10679 / Arkansas).